We begin with the raw amino-acid sequence, 293 residues long: Kallikrein-5 (293 aa).

Residues Met-1–Gly-22 form the signal peptide. Residues His-37–Asp-49 show a composition bias toward polar residues. The tract at residues His-37 to Ile-68 is disordered. Residues Ile-67 to Gln-290 form the Peptidase S1 domain. The N-linked (GlcNAc...) asparagine glycan is linked to Asn-69. 6 cysteine pairs are disulfide-bonded: Cys-73–Cys-206, Cys-93–Cys-109, Cys-178–Cys-279, Cys-185–Cys-251, Cys-217–Cys-231, and Cys-241–Cys-266. Catalysis depends on charge relay system residues His-108 and Asp-153. 2 N-linked (GlcNAc...) asparagine glycosylation sites follow: Asn-173 and Asn-208. Residue Ser-245 is the Charge relay system of the active site. Residue Asn-252 is glycosylated (N-linked (GlcNAc...) asparagine).

The protein belongs to the peptidase S1 family. Kallikrein subfamily. Interacts with SPINK9. Expressed in skin, breast, brain and testis. Expressed at the stratum granulosum of palmar skin.

The protein resides in the secreted. Its activity is regulated as follows. Inhibited by Zn2+. In terms of biological role, may be involved in desquamation. This chain is Kallikrein-5, found in Homo sapiens (Human).